The primary structure comprises 133 residues: MRHRKSGRQLNRNSSHRQAMFKNMAGSLVKHEVIKTTLPKAKELRRVIEPLITMAKEDSVANRRLAFARTGDKEVVGKLFNELGPRYEARPGGYTRILKCGFRAGDNAPMAYVELVDRPVVEAEEEAVEATEE.

This sequence belongs to the bacterial ribosomal protein bL17 family. Part of the 50S ribosomal subunit. Contacts protein L32.

The sequence is that of Large ribosomal subunit protein bL17 from Alteromonas mediterranea (strain DSM 17117 / CIP 110805 / LMG 28347 / Deep ecotype).